The following is a 167-amino-acid chain: Ribosome maturation factor RimM (167 aa).

A PRC barrel domain is found at 93–165 (KGVYYDFQLI…QVIIDPIPGL (73 aa)).

It belongs to the RimM family. In terms of assembly, binds ribosomal protein uS19.

It localises to the cytoplasm. An accessory protein needed during the final step in the assembly of 30S ribosomal subunit, possibly for assembly of the head region. Essential for efficient processing of 16S rRNA. May be needed both before and after RbfA during the maturation of 16S rRNA. It has affinity for free ribosomal 30S subunits but not for 70S ribosomes. The polypeptide is Ribosome maturation factor RimM (Dehalococcoides mccartyi (strain ATCC BAA-2266 / KCTC 15142 / 195) (Dehalococcoides ethenogenes (strain 195))).